The primary structure comprises 410 residues: Argininosuccinate synthase (410 aa).

Residues 11-19 and A37 each bind ATP; that span reads AYSGGLDTS. Residues Y88 and S93 each contribute to the L-citrulline site. 116–124 lines the ATP pocket; that stretch reads SHGCTGKGN. L-aspartate is bound by residues T120, N124, and D125. N124 contributes to the L-citrulline binding site. L-citrulline-binding residues include R128, S181, S190, E269, and Y281.

Belongs to the argininosuccinate synthase family. Type 1 subfamily. Homotetramer.

Its subcellular location is the cytoplasm. The catalysed reaction is L-citrulline + L-aspartate + ATP = 2-(N(omega)-L-arginino)succinate + AMP + diphosphate + H(+). It participates in amino-acid biosynthesis; L-arginine biosynthesis; L-arginine from L-ornithine and carbamoyl phosphate: step 2/3. In Schizosaccharomyces pombe (strain 972 / ATCC 24843) (Fission yeast), this protein is Argininosuccinate synthase (arg12).